The primary structure comprises 843 residues: MDKENSDVSAAPADLKISNISVQVVSAQKKLPVRRPPLPGRRLPLPGRRPPQRPIGKAKPKKQSKKKVPFWNVQNKIILFTVFLFILAVIAWTLLWLYISKTESKDAFYFAGMFRITNIEFLPEYRQKESREFLSVSRTVQQVINLVYTTSAFSKFYEQSVVADVSSNNKGGLLVHFWIVFVMPRAKGHIFCEDCVAAILKDSIQTSIINRTSVGSLQGLAVDMDSVVLNAGLRSDYSSTIGSDKGCSQYFYAEHLSLHYPLEISAASGRLMCHFKLVAIVGYLIRLSIKSIQIEADNCVTDSLTIYDSLLPIRSSILYRICEPTRTLMSFVSTNNLMLVTFKSPHIRRLSGIRAYFEVIPEQKCENTVLVKDITGFEGKISSPYYPSYYPPKCKCTWKFQTSLSTLGIALKFYNYSITKKSMKGCEHGWWEINEHMYCGSYMDHQTIFRVPSPLVHIQLQCSSRLSDKPLLAEYGSYNISQPCPVGSFRCSSGLCVPQAQRCDGVNDCFDESDELFCVSPQPACNTSSFRQHGPLICDGFRDCENGRDEQNCTQSIPCNNRTFKCGNDICFRKQNAKCDGTVDCPDGSDEEGCTCSRSSSALHRIIGGTDTLEGGWPWQVSLHFVGSAYCGASVISREWLLSAAHCFHGNRLSDPTPWTAHLGMYVQGNAKFVSPVRRIVVHEYYNSQTFDYDIALLQLSIAWPETLKQLIQPICIPPTGQRVRSGEKCWVTGWGRRHEADNKGSLVLQQAEVELIDQTLCVSTYGIITSRMLCAGIMSGKRDACKGDSGGPLSCRRKSDGKWILTGIVSWGHGSGRPNFPGVYTRVSNFVPWIHKYVPSLL.

At 1-76 (MDKENSDVSA…KVPFWNVQNK (76 aa)) the chain is on the cytoplasmic side. Residues 27–67 (AQKKLPVRRPPLPGRRLPLPGRRPPQRPIGKAKPKKQSKKK) are disordered. Basic residues predominate over residues 56–67 (GKAKPKKQSKKK). A helical; Signal-anchor for type II membrane protein transmembrane segment spans residues 77–97 (IILFTVFLFILAVIAWTLLWL). The Extracellular segment spans residues 98–843 (YISKTESKDA…WIHKYVPSLL (746 aa)). Positions 106 to 234 (DAFYFAGMFR…DSVVLNAGLR (129 aa)) constitute an SEA domain. 12 cysteine pairs are disulfide-bonded: Cys-247/Cys-273, Cys-299/Cys-322, Cys-365/Cys-396, Cys-484/Cys-496, Cys-491/Cys-509, Cys-503/Cys-518, Cys-525/Cys-544, Cys-538/Cys-553, Cys-559/Cys-571, Cys-566/Cys-585, Cys-579/Cys-594, and Cys-631/Cys-647. 2 CUB domains span residues 247 to 360 (CSQY…FEVI) and 365 to 481 (CENT…YNIS). 3 consecutive LDL-receptor class A domains span residues 483-519 (PCPV…LFCV), 517-554 (FCVS…QNCT), and 558-595 (PCNN…EGCT). The 235-residue stretch at 606-840 (IIGGTDTLEG…FVPWIHKYVP (235 aa)) folds into the Peptidase S1 domain. Catalysis depends on charge relay system residues His-646 and Asp-694. 2 disulfides stabilise this stretch: Cys-730–Cys-796 and Cys-762–Cys-775. Ser-790 (charge relay system) is an active-site residue.

The protein belongs to the peptidase S1 family. Forms a heterodimer with SERPINA5. Post-translationally, N-glycosylated. Expressed in brain, ovary, testis, salivary gland, trachea and lung.

It localises to the cell membrane. Functionally, serine protease which preferentially hydrolyzes peptides with Arg at the P1 position. The sequence is that of Transmembrane protease serine 7 (TMPRSS7) from Homo sapiens (Human).